Reading from the N-terminus, the 377-residue chain is Nitric oxide reductase FlRd-NAD(+) reductase (377 aa).

Belongs to the FAD-dependent oxidoreductase family. The cofactor is FAD.

It is found in the cytoplasm. It catalyses the reaction 2 reduced [nitric oxide reductase rubredoxin domain] + NAD(+) + H(+) = 2 oxidized [nitric oxide reductase rubredoxin domain] + NADH. It participates in nitrogen metabolism; nitric oxide reduction. Functionally, one of at least two accessory proteins for anaerobic nitric oxide (NO) reductase. Reduces the rubredoxin moiety of NO reductase. The sequence is that of Nitric oxide reductase FlRd-NAD(+) reductase from Escherichia coli O9:H4 (strain HS).